We begin with the raw amino-acid sequence, 217 residues long: tRNA (guanine-N(7)-)-methyltransferase (217 aa).

Glutamate 44, glutamate 69, aspartate 96, and aspartate 118 together coordinate S-adenosyl-L-methionine. The active site involves aspartate 118. Residues lysine 122, aspartate 154, and 191–194 (TEYE) contribute to the substrate site.

This sequence belongs to the class I-like SAM-binding methyltransferase superfamily. TrmB family.

It catalyses the reaction guanosine(46) in tRNA + S-adenosyl-L-methionine = N(7)-methylguanosine(46) in tRNA + S-adenosyl-L-homocysteine. It participates in tRNA modification; N(7)-methylguanine-tRNA biosynthesis. Its function is as follows. Catalyzes the formation of N(7)-methylguanine at position 46 (m7G46) in tRNA. In Bacillus cereus (strain B4264), this protein is tRNA (guanine-N(7)-)-methyltransferase.